Reading from the N-terminus, the 282-residue chain is Pantothenate synthetase (282 aa).

30 to 37 (MGALHAGH) contacts ATP. Histidine 37 serves as the catalytic Proton donor. Glutamine 61 is a binding site for (R)-pantoate. Glutamine 61 contacts beta-alanine. 147 to 150 (GEKD) serves as a coordination point for ATP. A (R)-pantoate-binding site is contributed by glutamine 153. ATP contacts are provided by residues valine 176 and 184–187 (LSSR).

This sequence belongs to the pantothenate synthetase family. Homodimer.

The protein resides in the cytoplasm. It carries out the reaction (R)-pantoate + beta-alanine + ATP = (R)-pantothenate + AMP + diphosphate + H(+). The protein operates within cofactor biosynthesis; (R)-pantothenate biosynthesis; (R)-pantothenate from (R)-pantoate and beta-alanine: step 1/1. In terms of biological role, catalyzes the condensation of pantoate with beta-alanine in an ATP-dependent reaction via a pantoyl-adenylate intermediate. The sequence is that of Pantothenate synthetase from Bacteroides fragilis (strain ATCC 25285 / DSM 2151 / CCUG 4856 / JCM 11019 / LMG 10263 / NCTC 9343 / Onslow / VPI 2553 / EN-2).